A 61-amino-acid polypeptide reads, in one-letter code: ATP synthase subunit J, mitochondrial (61 aa).

Residues 13-32 (LVKYYWPFFVGFGLTFYGVA) form a helical membrane-spanning segment.

As to quaternary structure, F-type ATP synthases have 2 components, the catalytic core F(1) and the membrane-embedded component F(0), linked together by a central stalk and a peripheral stalk. The central stalk, also called rotor shaft, is often seen as part of F(1). The peripheral stalk is seen as part of F(0). F(0) contains the membrane channel next to the rotor. F-type ATP synthases form dimers but each monomer functions independently in ATP generation. The dimer consists of 18 different polypeptides: ATP1 (subunit alpha, part of F(1), 3 molecules per monomer), ATP2 (subunit beta, part of F(1), 3 molecules per monomer), ATP3 (subunit gamma, part of the central stalk), ATP4 (subunit b, part of the peripheral stalk), ATP5/OSCP (subunit 5/OSCP, part of the peripheral stalk), ATP6 (subunit a, part of the peripheral stalk), ATP7 (subunit d, part of the peripheral stalk), ATP8 (subunit 8, part of the peripheral stalk), OLI1 (subunit c, part of the rotor, 10 molecules per monomer), ATP14 (subunit h, part of the peripheral stalk), ATP15 (subunit epsilon, part of the central stalk), ATP16 (subunit delta, part of the central stalk), ATP17 (subunit f, part of the peripheral stalk), ATP18 (subunit i/j, part of the peripheral stalk). Dimer-specific subunits are ATP19 (subunit k, at interface between monomers), ATP20 (subunit g, at interface between monomers), TIM11 (subunit e, at interface between monomers). Also contains subunit L.

The protein localises to the mitochondrion inner membrane. Functionally, mitochondrial membrane ATP synthase (F(1)F(0) ATP synthase or Complex V) produces ATP from ADP in the presence of a proton gradient across the membrane which is generated by electron transport complexes of the respiratory chain. F-type ATP synthases consist of two structural domains, F(1) - containing the extramembraneous catalytic core, and F(0) - containing the membrane proton channel, linked together by a central stalk and a peripheral stalk. During catalysis, ATP synthesis in the catalytic domain of F(1) is coupled via a rotary mechanism of the central stalk subunits to proton translocation. Part of the complex F(0) domain. Minor subunit located with subunit a/ATP6 in the membrane. The chain is ATP synthase subunit J, mitochondrial from Pichia angusta (Yeast).